The chain runs to 923 residues: Isoleucine--tRNA ligase (923 aa).

A 'HIGH' region motif is present at residues 57–67 (PYANGDIHIGT). Glutamate 561 contributes to the L-isoleucyl-5'-AMP binding site. Residues 602–606 (AMHKS) carry the 'KMSKS' region motif. ATP is bound at residue lysine 605. Residues cysteine 895, cysteine 898, cysteine 915, and cysteine 918 each contribute to the Zn(2+) site.

Belongs to the class-I aminoacyl-tRNA synthetase family. IleS type 1 subfamily. Monomer. Zn(2+) serves as cofactor.

The protein localises to the cytoplasm. The catalysed reaction is tRNA(Ile) + L-isoleucine + ATP = L-isoleucyl-tRNA(Ile) + AMP + diphosphate. Catalyzes the attachment of isoleucine to tRNA(Ile). As IleRS can inadvertently accommodate and process structurally similar amino acids such as valine, to avoid such errors it has two additional distinct tRNA(Ile)-dependent editing activities. One activity is designated as 'pretransfer' editing and involves the hydrolysis of activated Val-AMP. The other activity is designated 'posttransfer' editing and involves deacylation of mischarged Val-tRNA(Ile). This chain is Isoleucine--tRNA ligase, found in Brachyspira hyodysenteriae (strain ATCC 49526 / WA1).